A 425-amino-acid chain; its full sequence is Ribosomal protein uS12 methylthiotransferase RimO (425 aa).

Positions 2-115 constitute an MTTase N-terminal domain; that stretch reads KNFTVITLGC…IIDYIKQFSK (114 aa). 6 residues coordinate [4Fe-4S] cluster: cysteine 11, cysteine 47, cysteine 78, cysteine 142, cysteine 146, and cysteine 149. Positions 128–357 constitute a Radical SAM core domain; that stretch reads VEPPSYRYIK…MARQAVISLE (230 aa). The TRAM domain maps to 360-425; the sequence is RALIGKKYEA…YEYDVKGVIV (66 aa).

It belongs to the methylthiotransferase family. RimO subfamily. [4Fe-4S] cluster serves as cofactor.

The protein localises to the cytoplasm. The catalysed reaction is L-aspartate(89)-[ribosomal protein uS12]-hydrogen + (sulfur carrier)-SH + AH2 + 2 S-adenosyl-L-methionine = 3-methylsulfanyl-L-aspartate(89)-[ribosomal protein uS12]-hydrogen + (sulfur carrier)-H + 5'-deoxyadenosine + L-methionine + A + S-adenosyl-L-homocysteine + 2 H(+). In terms of biological role, catalyzes the methylthiolation of an aspartic acid residue of ribosomal protein uS12. This Thermodesulfovibrio yellowstonii (strain ATCC 51303 / DSM 11347 / YP87) protein is Ribosomal protein uS12 methylthiotransferase RimO.